A 212-amino-acid chain; its full sequence is F420-dependent NADP reductase (212 aa).

Residues 9–12 (TGNL), 31–32 (SR), Lys36, Ile72, His76, Val98, and Ala137 each bind NADP(+). Leu207 contributes to the coenzyme F420-(gamma-Glu)n binding site.

Belongs to the F420-dependent NADP reductase family. As to quaternary structure, homodimer.

The catalysed reaction is reduced coenzyme F420-(gamma-L-Glu)(n) + NADP(+) = oxidized coenzyme F420-(gamma-L-Glu)(n) + NADPH + 2 H(+). Functionally, catalyzes the reversible reduction of NADP(+) by F420H(2). In this reaction the proS hydrogen at C5 of F420 is transferred into the proS position at C4 of NADPH. This Archaeoglobus fulgidus (strain ATCC 49558 / DSM 4304 / JCM 9628 / NBRC 100126 / VC-16) protein is F420-dependent NADP reductase (fno).